We begin with the raw amino-acid sequence, 568 residues long: Multidrug and toxin extrusion protein 1 (568 aa).

At M1 the chain carries N-acetylmethionine. The Cytoplasmic portion of the chain corresponds to 1–36 (MEAPVELGPGGRQASPERRHWLRCLVLSDFREELRA). Residues 37 to 57 (LLVLACPAFLAQLMVFLISFV) traverse the membrane as a helical segment. At 58 to 71 (SSVFCGHLSKLELN) the chain is on the extracellular side. A helical membrane pass occupies residues 72-92 (AVTLAIAVINVMGVSVGFGLS). Topologically, residues 93 to 119 (SACDTLISQTYGSRNLKHVGVILQRGS) are cytoplasmic. A helical membrane pass occupies residues 120-140 (LILLLCCLPCWALFLNTQHIL). The Extracellular portion of the chain corresponds to 141-151 (LLFRQDPAVSR). The helical transmembrane segment at 152–172 (LTQTYVTIFIPALPATFLYTL) threads the bilayer. Residues 173–175 (QVK) are Cytoplasmic-facing. The chain crosses the membrane as a helical span at residues 176–196 (YLLNQGIVLPQVVTGVAANLV). Over 197–214 (NALANYLFVYQLHLGVMG) the chain is Extracellular. Residues 215-235 (SALANTVAQFTLALLLFLYIL) traverse the membrane as a helical segment. At 236–255 (RSKVYQATWGGWSLECLQDW) the chain is on the cytoplasmic side. A helical membrane pass occupies residues 256–278 (ASFFRLAIPSMLMLCMEWWAYEI). At 279–294 (GSFLSGILGMVELGAQ) the chain is on the extracellular side. A helical membrane pass occupies residues 295–315 (SVTYELAVIVYMIPMGLSVAV). At 316-335 (NVRVGNALGAGNIEQAKKSS) the chain is on the cytoplasmic side. Residues 336 to 356 (AVALLVTELIAVVFCVMLLSC) traverse the membrane as a helical segment. The Extracellular segment spans residues 357-369 (KDLVGYIFTSDRD). A helical transmembrane segment spans residues 370–390 (IIALVAQVTPIYAVSHLFESL). Over 391–407 (AGTSGGILRGSGNQKFG) the chain is Cytoplasmic. The helical transmembrane segment at 408 to 430 (AIVNAIGYYVVGLPIGIALMFAA) threads the bilayer. At 431–433 (KLG) the chain is on the extracellular side. The chain crosses the membrane as a helical span at residues 434 to 456 (VIGLWLGIVVCAVSQAVCFLGFI). At 457–544 (ARLNWTKACQ…LSGKQLALRR (88 aa)) the chain is on the cytoplasmic side. A helical membrane pass occupies residues 545–565 (GLLLLGVILVLLAGILVKVYV). Over 566–568 (RTQ) the chain is Extracellular.

The protein belongs to the multi antimicrobial extrusion (MATE) (TC 2.A.66.1) family. In terms of tissue distribution, predominantly expressed in kidney and liver.

It localises to the cell membrane. The protein resides in the apical cell membrane. It carries out the reaction thiamine(out) + H(+)(in) = thiamine(in) + H(+)(out). The enzyme catalyses estrone 3-sulfate(in) + H(+)(out) = estrone 3-sulfate(out) + H(+)(in). It catalyses the reaction creatinine(in) + H(+)(out) = creatinine(out) + H(+)(in). The catalysed reaction is agmatine(in) + H(+)(out) = agmatine(out) + H(+)(in). Its function is as follows. Multidrug efflux pump that functions as a H(+)/organic cation antiporter. Plays a physiological role in the excretion of cationic compounds including endogenous metabolites, drugs, toxins through the kidney and liver, into urine and bile respectively. Mediates the efflux of endogenous compounds such as creatinine, vitamin B1/thiamine, agmatine and estrone-3-sulfate. May also contribute to regulate the transport of cationic compounds in testis across the blood-testis-barrier. The sequence is that of Multidrug and toxin extrusion protein 1 (SLC47A1) from Oryctolagus cuniculus (Rabbit).